The primary structure comprises 202 residues: Dephospho-CoA kinase (202 aa).

The DPCK domain occupies 5–202; the sequence is IVGLTGGIAS…DADYRARSDR (198 aa). 13–18 contributes to the ATP binding site; that stretch reads ASGKSA.

Belongs to the CoaE family.

It localises to the cytoplasm. It catalyses the reaction 3'-dephospho-CoA + ATP = ADP + CoA + H(+). It participates in cofactor biosynthesis; coenzyme A biosynthesis; CoA from (R)-pantothenate: step 5/5. Catalyzes the phosphorylation of the 3'-hydroxyl group of dephosphocoenzyme A to form coenzyme A. This Xanthomonas oryzae pv. oryzae (strain MAFF 311018) protein is Dephospho-CoA kinase.